Reading from the N-terminus, the 1761-residue chain is Nonribosomal peptide synthetase 6 (1761 aa).

The segment at 63–468 (ERAALHPEKI…GRQDQQVKLR (406 aa)) is adenylation. The 76-residue stretch at 600 to 675 (EATTEMELKL…AMAEKAKPVS (76 aa)) folds into the Carrier 1 domain. The residue at position 636 (serine 636) is an O-(pantetheine 4'-phosphoryl)serine. Positions 712-1135 (VEDVYPCTPL…AVLDPAEARD (424 aa)) are condensation 1. Carrier domains lie at 1169–1242 (SPNE…SNER) and 1237–1313 (SASN…EEEM). Serine 1203 and serine 1274 each carry O-(pantetheine 4'-phosphoryl)serine. Residues 1354–1677 (IYPTRPLQQL…DKVQWFDTVV (324 aa)) form a condensation 2 region.

It belongs to the NRP synthetase family.

The protein operates within siderophore biosynthesis. In terms of biological role, NRPS involved in extracellular coprogen-type siderophores biosynthesis including coprogen, neocoprogen I and neocoprogen II. The role of extracellular siderophores in fungal virulence to plants is to supply iron to the fungus during plant infection, but not to act as phytotoxins, depriving their hosts of iron. The protein is Nonribosomal peptide synthetase 6 of Cochliobolus miyabeanus (Brown spot disease fungus).